We begin with the raw amino-acid sequence, 116 residues long: MADLIPLAQARCVPRKGSDHKLGEARLAELLPQVPGWELSEGGQALLRTFRFKNYYATMAFVNALAWIAHHEDHHPDLGVHYDRAVVRFSTHDVGGLSENDFICAAKTSALTEQLP.

This sequence belongs to the pterin-4-alpha-carbinolamine dehydratase family.

The catalysed reaction is (4aS,6R)-4a-hydroxy-L-erythro-5,6,7,8-tetrahydrobiopterin = (6R)-L-erythro-6,7-dihydrobiopterin + H2O. The protein is Putative pterin-4-alpha-carbinolamine dehydratase of Stenotrophomonas maltophilia (strain R551-3).